Here is a 336-residue protein sequence, read N- to C-terminus: Phenylalanine--tRNA ligase alpha subunit (336 aa).

Residue glutamate 259 participates in Mg(2+) binding.

Belongs to the class-II aminoacyl-tRNA synthetase family. Phe-tRNA synthetase alpha subunit type 1 subfamily. As to quaternary structure, tetramer of two alpha and two beta subunits. Mg(2+) serves as cofactor.

The protein localises to the cytoplasm. It catalyses the reaction tRNA(Phe) + L-phenylalanine + ATP = L-phenylalanyl-tRNA(Phe) + AMP + diphosphate + H(+). The polypeptide is Phenylalanine--tRNA ligase alpha subunit (Tropheryma whipplei (strain Twist) (Whipple's bacillus)).